We begin with the raw amino-acid sequence, 136 residues long: Class I hydrophobin A (136 aa).

An N-terminal signal peptide occupies residues 1 to 16 (MRFALAITTLIAAVTA). 4 disulfides stabilise this stretch: C39–C109, C47–C103, C48–C85, and C110–C128.

Belongs to the fungal hydrophobin family. As to expression, expressed in aerial conidia, in vitro blastospores, submerged conidia, and cells sporulating on chitin and insect cuticle, with hyd1 expression peaking in growing mycelia.

The protein localises to the secreted. The protein resides in the cell wall. It localises to the spore coat. Its subcellular location is the vacuole. It is found in the cytoplasmic vesicle. Aerial growth, conidiation, and dispersal of filamentous fungi in the environment rely upon a capability of their secreting small amphipathic proteins called hydrophobins (HPBs) with low sequence identity. Class I can self-assemble into an outermost layer of rodlet bundles on aerial cell surfaces, conferring cellular hydrophobicity that supports fungal growth, development and dispersal; whereas Class II form highly ordered films at water-air interfaces through intermolecular interactions but contribute nothing to the rodlet structure. Hyd1A contributes to certain cell wall-related features, such as hydrophobicity but is not involved in cell wall-related events during fungal proliferation in host hemocoel. Hyd1A and hyd1B coregulate the formation, morphology and orderly assembly of rodlet bundles required for conidial hydrophobicity and infectivity. Contributes to the spore coat rodlet layer. This is Class I hydrophobin A from Beauveria bassiana (strain ARSEF 2860) (White muscardine disease fungus).